Consider the following 363-residue polypeptide: UDP-3-O-acylglucosamine N-acyltransferase (363 aa).

His266 acts as the Proton acceptor in catalysis.

Belongs to the transferase hexapeptide repeat family. LpxD subfamily. In terms of assembly, homotrimer.

The enzyme catalyses a UDP-3-O-[(3R)-3-hydroxyacyl]-alpha-D-glucosamine + a (3R)-hydroxyacyl-[ACP] = a UDP-2-N,3-O-bis[(3R)-3-hydroxyacyl]-alpha-D-glucosamine + holo-[ACP] + H(+). Its pathway is bacterial outer membrane biogenesis; LPS lipid A biosynthesis. Functionally, catalyzes the N-acylation of UDP-3-O-acylglucosamine using 3-hydroxyacyl-ACP as the acyl donor. Is involved in the biosynthesis of lipid A, a phosphorylated glycolipid that anchors the lipopolysaccharide to the outer membrane of the cell. The sequence is that of UDP-3-O-acylglucosamine N-acyltransferase from Bordetella bronchiseptica (strain ATCC BAA-588 / NCTC 13252 / RB50) (Alcaligenes bronchisepticus).